A 218-amino-acid polypeptide reads, in one-letter code: Protein-L-isoaspartate O-methyltransferase (218 aa).

The active site involves serine 60.

This sequence belongs to the methyltransferase superfamily. L-isoaspartyl/D-aspartyl protein methyltransferase family.

It localises to the cytoplasm. The catalysed reaction is [protein]-L-isoaspartate + S-adenosyl-L-methionine = [protein]-L-isoaspartate alpha-methyl ester + S-adenosyl-L-homocysteine. In terms of biological role, catalyzes the methyl esterification of L-isoaspartyl residues in peptides and proteins that result from spontaneous decomposition of normal L-aspartyl and L-asparaginyl residues. It plays a role in the repair and/or degradation of damaged proteins. This is Protein-L-isoaspartate O-methyltransferase from Roseiflexus castenholzii (strain DSM 13941 / HLO8).